Here is a 1397-residue protein sequence, read N- to C-terminus: DNA-directed RNA polymerase subunit beta' (1397 aa).

Residues C75, C77, C90, and C93 each contribute to the Zn(2+) site. Mg(2+)-binding residues include D465, D467, and D469. Zn(2+)-binding residues include C819, C893, C900, and C903.

The protein belongs to the RNA polymerase beta' chain family. In terms of assembly, the RNAP catalytic core consists of 2 alpha, 1 beta, 1 beta' and 1 omega subunit. When a sigma factor is associated with the core the holoenzyme is formed, which can initiate transcription. The cofactor is Mg(2+). It depends on Zn(2+) as a cofactor.

It catalyses the reaction RNA(n) + a ribonucleoside 5'-triphosphate = RNA(n+1) + diphosphate. DNA-dependent RNA polymerase catalyzes the transcription of DNA into RNA using the four ribonucleoside triphosphates as substrates. The protein is DNA-directed RNA polymerase subunit beta' of Acinetobacter baumannii (strain SDF).